The sequence spans 637 residues: Capsid scaffolding protein (637 aa).

Catalysis depends on charge relay system residues histidine 61, serine 129, and histidine 148. 3 disordered regions span residues 262–326 (PERG…PGDG), 414–479 (LPAA…PHET), and 502–608 (HAPY…EAGA). Low complexity predominate over residues 277–317 (SPAASVPAPQVAVRARQVASSSSSSSFPAPADMNPVSASGA). Positions 326-345 (GSYLWIPASHYNQLVTGQSA) are interaction with pAP. The Nuclear localization signal signature appears at 428–431 (KRRR). 2 stretches are compositionally biased toward basic and acidic residues: residues 432–450 (HEVE…DRDF) and 457–468 (ARPEPRPVDSRR). Composition is skewed to pro residues over residues 537-559 (LPPP…PSYP) and 566-594 (GPAP…PPAA). Low complexity predominate over residues 595-608 (SLPQPEAPGAEAGA). Positions 617–637 (HVNVDTARAADLFVSQMMGSR) are interaction with major capsid protein.

Belongs to the herpesviridae capsid scaffolding protein family. Homomultimer. Interacts with major capsid protein. In terms of assembly, exists in a monomer-dimer equilibrium with the dimer being the active species. Capsid scaffolding protein is cleaved by assemblin after formation of the spherical procapsid. As a result, the capsid obtains its mature, icosahedral shape. Cleavages occur at two or more sites: release (R-site) and maturation (M-site).

It localises to the host cytoplasm. The protein localises to the host nucleus. It carries out the reaction Cleaves -Ala-|-Ser- and -Ala-|-Ala- bonds in the scaffold protein.. Functionally, acts as a scaffold protein by binding major capsid protein in the cytoplasm, inducing the nuclear localization of both proteins. Multimerizes in the nucleus such as major capsid protein forms the icosahedral T=16 capsid. Autocatalytic cleavage releases the assembly protein, and subsequently abolishes interaction with major capsid protein. Cleavages products are evicted from the capsid before or during DNA packaging. Its function is as follows. Protease that plays an essential role in virion assembly within the nucleus. Catalyzes the cleavage of the assembly protein after formation of the spherical procapsid. By that cleavage, the capsid matures and gains its icosahedral shape. The cleavage sites seem to include -Ala-Ser-, -Ala-Ala-, as well as Ala-Thr bonds. Assemblin and cleavages products are evicted from the capsid before or during DNA packaging. Plays a major role in capsid assembly. Acts as a scaffold protein by binding major capsid protein. Multimerizes in the nucleus such as major capsid protein forms the icosahedral T=16 capsid. Cleaved by assemblin after capsid completion. The cleavages products are evicted from the capsid before or during DNA packaging. The polypeptide is Capsid scaffolding protein (UL26) (Homo sapiens (Human)).